The sequence spans 612 residues: Dihydroxy-acid dehydratase (612 aa).

Aspartate 81 provides a ligand contact to Mg(2+). Position 122 (cysteine 122) interacts with [2Fe-2S] cluster. Residues aspartate 123 and lysine 124 each contribute to the Mg(2+) site. Lysine 124 carries the post-translational modification N6-carboxylysine. Residue cysteine 195 coordinates [2Fe-2S] cluster. Glutamate 491 is a binding site for Mg(2+). Serine 517 functions as the Proton acceptor in the catalytic mechanism.

Belongs to the IlvD/Edd family. Homodimer. Requires [2Fe-2S] cluster as cofactor. Mg(2+) is required as a cofactor.

It carries out the reaction (2R)-2,3-dihydroxy-3-methylbutanoate = 3-methyl-2-oxobutanoate + H2O. The enzyme catalyses (2R,3R)-2,3-dihydroxy-3-methylpentanoate = (S)-3-methyl-2-oxopentanoate + H2O. It functions in the pathway amino-acid biosynthesis; L-isoleucine biosynthesis; L-isoleucine from 2-oxobutanoate: step 3/4. The protein operates within amino-acid biosynthesis; L-valine biosynthesis; L-valine from pyruvate: step 3/4. Its function is as follows. Functions in the biosynthesis of branched-chain amino acids. Catalyzes the dehydration of (2R,3R)-2,3-dihydroxy-3-methylpentanoate (2,3-dihydroxy-3-methylvalerate) into 2-oxo-3-methylpentanoate (2-oxo-3-methylvalerate) and of (2R)-2,3-dihydroxy-3-methylbutanoate (2,3-dihydroxyisovalerate) into 2-oxo-3-methylbutanoate (2-oxoisovalerate), the penultimate precursor to L-isoleucine and L-valine, respectively. The sequence is that of Dihydroxy-acid dehydratase from Buchnera aphidicola subsp. Baizongia pistaciae (strain Bp).